A 403-amino-acid chain; its full sequence is Phosphoglycerate kinase (403 aa).

Substrate is bound by residues 21 to 23 (DFN), Arg36, 59 to 62 (HLGR), Arg119, and Arg159. Residues Lys214, Gly301, Glu332, and 359-362 (GGDS) contribute to the ATP site.

It belongs to the phosphoglycerate kinase family. In terms of assembly, monomer.

The protein resides in the cytoplasm. The enzyme catalyses (2R)-3-phosphoglycerate + ATP = (2R)-3-phospho-glyceroyl phosphate + ADP. The protein operates within carbohydrate degradation; glycolysis; pyruvate from D-glyceraldehyde 3-phosphate: step 2/5. This is Phosphoglycerate kinase from Lactobacillus gasseri (strain ATCC 33323 / DSM 20243 / BCRC 14619 / CIP 102991 / JCM 1131 / KCTC 3163 / NCIMB 11718 / NCTC 13722 / AM63).